Consider the following 90-residue polypeptide: Gene 56 protein (90 aa).

The Glutaredoxin domain occupies 1-90 (MRTMFTPITI…DYYTASETGL (90 aa)). Cysteines 16 and 19 form a disulfide.

The polypeptide is Gene 56 protein (56) (Mycobacterium phage D29 (Mycobacteriophage D29)).